The following is a 126-amino-acid chain: Lymphocyte antigen 6E (126 aa).

A signal peptide spans 1–20; it reads MKAFLFAVLAAVLCVERAHT. Residues 21–98 enclose the UPAR/Ly6 domain; that stretch reads LICFSCSDAS…CCDSFLCNIS (78 aa). Disulfide bonds link Cys-23-Cys-48, Cys-26-Cys-35, Cys-41-Cys-69, Cys-73-Cys-89, and Cys-90-Cys-95. Asn-96 carries an N-linked (GlcNAc...) asparagine glycan. Residue Ser-98 is the site of GPI-anchor amidated serine attachment. Positions 99-126 are cleaved as a propeptide — removed in mature form; it reads GSSSVKASYAVLALGILVSFVYVLRARE.

As to expression, expressed by thymic blast cells.

Its subcellular location is the cell membrane. The chain is Lymphocyte antigen 6E (LY6E) from Gallus gallus (Chicken).